Here is a 628-residue protein sequence, read N- to C-terminus: tRNA uridine 5-carboxymethylaminomethyl modification enzyme MnmG (628 aa).

13 to 18 lines the FAD pocket; sequence GAGHAG. 273–287 is a binding site for NAD(+); it reads GPRYCPSIEDKIVRF.

The protein belongs to the MnmG family. Homodimer. Heterotetramer of two MnmE and two MnmG subunits. Requires FAD as cofactor.

Its subcellular location is the cytoplasm. Its function is as follows. NAD-binding protein involved in the addition of a carboxymethylaminomethyl (cmnm) group at the wobble position (U34) of certain tRNAs, forming tRNA-cmnm(5)s(2)U34. This Buchnera aphidicola subsp. Acyrthosiphon pisum (strain APS) (Acyrthosiphon pisum symbiotic bacterium) protein is tRNA uridine 5-carboxymethylaminomethyl modification enzyme MnmG.